The sequence spans 820 residues: TORTIFOLIA1-like protein 2 (820 aa).

HEAT repeat units follow at residues 61-98 (DKVS…FHEG), 102-139 (PYLG…KMSC), 146-183 (GVFV…SSPE), 187-224 (AIIQ…AGGA), and 228-265 (SVLS…TGEK). The span at 304–321 (PGSDSPEPSETESSVKES) shows a compositional bias: low complexity. Disordered stretches follow at residues 304 to 325 (PGSD…YNGA), 357 to 377 (PVSA…SNQD), and 584 to 644 (GSTI…GKTG). Over residues 367–377 (YNDDPRKSNQD) the composition is skewed to basic and acidic residues. Positions 584–613 (GSTISPRLSSCTSRTSTDIRNRQSTLSTSK) are enriched in polar residues.

This Arabidopsis thaliana (Mouse-ear cress) protein is TORTIFOLIA1-like protein 2.